We begin with the raw amino-acid sequence, 336 residues long: Dihydroorotate dehydrogenase (quinone) (336 aa).

FMN is bound by residues 62–66 and T86; that span reads AGLDK. K66 serves as a coordination point for substrate. 111–115 contributes to the substrate binding site; that stretch reads NRMGF. The FMN site is built by N139 and N172. N172 serves as a coordination point for substrate. The active-site Nucleophile is S175. A substrate-binding site is contributed by N177. FMN contacts are provided by K217 and T245. 246 to 247 is a substrate binding site; that stretch reads NT. Residues G268, G297, and 318–319 contribute to the FMN site; that span reads YS.

Belongs to the dihydroorotate dehydrogenase family. Type 2 subfamily. As to quaternary structure, monomer. Requires FMN as cofactor.

It localises to the cell membrane. It catalyses the reaction (S)-dihydroorotate + a quinone = orotate + a quinol. It participates in pyrimidine metabolism; UMP biosynthesis via de novo pathway; orotate from (S)-dihydroorotate (quinone route): step 1/1. In terms of biological role, catalyzes the conversion of dihydroorotate to orotate with quinone as electron acceptor. The protein is Dihydroorotate dehydrogenase (quinone) of Shigella dysenteriae serotype 1 (strain Sd197).